The sequence spans 159 residues: E3 ubiquitin ligase complex SCF subunit sconC (159 aa).

Residues 101-159 form an interaction with the F-box domain of F-box proteins region; that stretch reads ILAANYLDIKALLDVGCKTVANMIKGKSPEEIRKTFNIQNDFTPEEEDQIRRENEWAEE.

This sequence belongs to the SKP1 family. Component of the SCF (SKP1-CUL1-F-box protein) E3 ubiquitin ligase complexes.

It participates in protein modification; protein ubiquitination. Its function is as follows. Essential component of the SCF (SKP1-CUL1-F-box protein) E3 ubiquitin ligase complexes, which mediate the ubiquitination and subsequent proteasomal degradation of target proteins. Controls sulfur metabolite repression, probably by mediating the inactivation or degradation of the metR transcription factor. This chain is E3 ubiquitin ligase complex SCF subunit sconC (sconC), found in Aspergillus clavatus (strain ATCC 1007 / CBS 513.65 / DSM 816 / NCTC 3887 / NRRL 1 / QM 1276 / 107).